An 89-amino-acid chain; its full sequence is Cytochrome b (89 aa).

2 helical membrane passes run 38 to 58 (FGPLAGICLVIQIVTGVFLAM) and 82 to 89 (WLLRYMHA). His-88 is a binding site for heme b.

The protein belongs to the cytochrome b family. As to quaternary structure, the main subunits of complex b-c1 are: cytochrome b, cytochrome c1 and the Rieske protein. Requires heme b as cofactor.

It is found in the mitochondrion inner membrane. Functionally, component of the ubiquinol-cytochrome c reductase complex (complex III or cytochrome b-c1 complex) that is part of the mitochondrial respiratory chain. The b-c1 complex mediates electron transfer from ubiquinol to cytochrome c. Contributes to the generation of a proton gradient across the mitochondrial membrane that is then used for ATP synthesis. This chain is Cytochrome b (MT-CYB), found in Brassica napus (Rape).